The sequence spans 146 residues: MKILVVNKKLHFNYEVLEKIEAGIELKGVEVKSIHLNNANISDSYVIFKRNEAYILNMNIAPYSHGNIYNVDPLRTRKLLLHKNEIIKYQMRIKKESLTMVPSKIYWRKNKLKVEIALAKGKKQFDKRQTIKDRDNSREARKHIRV.

Over residues K127 to E139 the composition is skewed to basic and acidic residues. The tract at residues K127 to V146 is disordered.

This sequence belongs to the SmpB family.

It is found in the cytoplasm. Functionally, required for rescue of stalled ribosomes mediated by trans-translation. Binds to transfer-messenger RNA (tmRNA), required for stable association of tmRNA with ribosomes. tmRNA and SmpB together mimic tRNA shape, replacing the anticodon stem-loop with SmpB. tmRNA is encoded by the ssrA gene; the 2 termini fold to resemble tRNA(Ala) and it encodes a 'tag peptide', a short internal open reading frame. During trans-translation Ala-aminoacylated tmRNA acts like a tRNA, entering the A-site of stalled ribosomes, displacing the stalled mRNA. The ribosome then switches to translate the ORF on the tmRNA; the nascent peptide is terminated with the 'tag peptide' encoded by the tmRNA and targeted for degradation. The ribosome is freed to recommence translation, which seems to be the essential function of trans-translation. In Malacoplasma penetrans (strain HF-2) (Mycoplasma penetrans), this protein is SsrA-binding protein.